The chain runs to 1038 residues: SEH-associated protein 4 (1038 aa).

One copy of the WD 1 repeat lies at 50-90; sequence KDFGSITCLDYSESEIGMIGVGEKNGYLRIFNISGQNSSSP. Phosphoserine is present on residues serine 123 and serine 136. WD repeat units follow at residues 147 to 189, 235 to 276, and 544 to 587; these read KKQR…DSHE, QHPT…DQAS, and NTWR…SNQD.

Belongs to the WD repeat mio family. In terms of assembly, component of the SEA complex composed of at least IML1/SEA1, RTC1/SEA2, MTC5/SEA3, NPR2, NPR3, SEA4, SEC13 and SEH1.

It is found in the cytoplasm. It localises to the vacuole membrane. In terms of biological role, component of the SEA complex which coats the vacuolar membrane and is involved in intracellular trafficking, autophagy, response to nitrogen starvation, and amino acid biogenesis. This is SEH-associated protein 4 (SEA4) from Saccharomyces cerevisiae (strain ATCC 204508 / S288c) (Baker's yeast).